The chain runs to 1775 residues: Protein TIC 214 (1775 aa).

The next 6 helical transmembrane spans lie at 19 to 39, 68 to 88, 91 to 111, 133 to 153, 176 to 196, and 227 to 247; these read IINS…FSIG, FIAG…HLAL, PHTI…WNNH, VFLN…SSML, VGWL…LVWI, and IFSI…PSPI. The segment at 1491–1512 is disordered; the sequence is KESAGQGERESDNEKKKNLESA.

Belongs to the TIC214 family. As to quaternary structure, part of the Tic complex.

It localises to the plastid. It is found in the chloroplast inner membrane. Functionally, involved in protein precursor import into chloroplasts. May be part of an intermediate translocation complex acting as a protein-conducting channel at the inner envelope. In Lobularia maritima (Sweet alyssum), this protein is Protein TIC 214.